The primary structure comprises 679 residues: Protein SQS1 (679 aa).

Disordered stretches follow at residues 1–40 (MAKR…RNNS), 76–161 (DSMR…PEPK), 242–315 (VSEE…PGFG), and 391–419 (PEEP…QDDE). Positions 16 to 32 (RGRRGGRAGHRGRGGRR) are enriched in basic residues. The segment covering 146–156 (GDDEPEGEYEP) has biased composition (acidic residues). A compositionally biased stretch (acidic residues) spans 406 to 419 (ENYDDSEEDEQDDE). The 63-residue stretch at 514 to 576 (GFHIENIIDE…HTRVLVQKGG (63 aa)) folds into the R3H domain. The 47-residue stretch at 633-679 (QDNVGRRLLEKLGWTHGEGLGVHGNKGISEPLMARVKKNRSGLRYTE) folds into the G-patch domain.

Belongs to the SQS1 family.

The protein localises to the cytoplasm. The protein resides in the nucleus. In terms of biological role, may be involved in splicing. The sequence is that of Protein SQS1 (SQS1) from Eremothecium gossypii (strain ATCC 10895 / CBS 109.51 / FGSC 9923 / NRRL Y-1056) (Yeast).